The chain runs to 585 residues: MSLLRWMGMNSPGSTDRRKSTWEAELPKPSIRPETLTDRFYGLTNYGNTCYVSSVLVSLYHLKPFRDSLNSYPLPSAPPNFKSVCTKTNHPESSSSRHSKKKSMENRKSSLYGSNGINSCGCVDISNVGSESGTKHQIVVGESNCSAYGMKENIYTCLKDLYCSVSCCDCRYGICSPERFIQVLRRDNEAFRSTQQQDAHEFFNFLLNSVTETLDEYYGNHSDVMHPKWVHSLFEGTLTSETKCLTCENITSRDESFLDLSIDIENHTSVTSCLRSFSASEMLSSKNKFHCDVCKSLQEAEKRMKIKKLPKILSLHLKRFKYNETQEGHDKLFYTIVFTNEMRLFTTTEDAENAERMYYLSSVIVHVGGGPHRGHYVSIVRTKTYGWVLFDDENVTPVNENYLQRFFGDQPGQATAYVLFYTAADEEDDDVSEVDTKESIKPMSIPSQLKQESVEVSNLSSTPRSNSTITYPDMDPMVASFSSQYSHKTLDRDINSRSYFDREPSLDAERFHSRSVDASPKAVRRESRSFFPSLTRKRSKFFGSSQSNSPKDSPLRDTHKSSDEHSESKHSHTLPWQFSRSRSKR.

Positions 1 to 23 (MSLLRWMGMNSPGSTDRRKSTWE) are disordered. Residues 41 to 424 (YGLTNYGNTC…TAYVLFYTAA (384 aa)) enclose the USP domain. Cysteine 50 functions as the Nucleophile in the catalytic mechanism. Positions 85-110 (CTKTNHPESSSSRHSKKKSMENRKSS) are disordered. Histidine 375 functions as the Proton acceptor in the catalytic mechanism. Residues 447 to 470 (SQLKQESVEVSNLSSTPRSNSTIT) are compositionally biased toward polar residues. Residues 447–473 (SQLKQESVEVSNLSSTPRSNSTITYPD) are disordered. At serine 505 the chain carries Phosphoserine. 2 disordered regions span residues 511 to 530 (FHSR…SRSF) and 540 to 585 (KFFG…RSKR). Polar residues predominate over residues 542–551 (FGSSQSNSPK). Residue serine 549 is modified to Phosphoserine. Basic and acidic residues predominate over residues 553-570 (SPLRDTHKSSDEHSESKH). Residues 574–585 (LPWQFSRSRSKR) are compositionally biased toward polar residues.

This sequence belongs to the peptidase C19 family. As to quaternary structure, interacts with bun107 and bun62.

It is found in the nucleus. Its subcellular location is the cytoplasm. The protein resides in the cell tip. It carries out the reaction Thiol-dependent hydrolysis of ester, thioester, amide, peptide and isopeptide bonds formed by the C-terminal Gly of ubiquitin (a 76-residue protein attached to proteins as an intracellular targeting signal).. In terms of biological role, ubiquitin C-terminal hydrolase involved in regulating actin dynamics and/or endocytosis at cell tips and septa. This chain is Probable ubiquitin carboxyl-terminal hydrolase 9 (ubp9), found in Schizosaccharomyces pombe (strain 972 / ATCC 24843) (Fission yeast).